The chain runs to 189 residues: ATP synthase subunit delta (189 aa).

The protein belongs to the ATPase delta chain family. F-type ATPases have 2 components, F(1) - the catalytic core - and F(0) - the membrane proton channel. F(1) has five subunits: alpha(3), beta(3), gamma(1), delta(1), epsilon(1). F(0) has three main subunits: a(1), b(2) and c(10-14). The alpha and beta chains form an alternating ring which encloses part of the gamma chain. F(1) is attached to F(0) by a central stalk formed by the gamma and epsilon chains, while a peripheral stalk is formed by the delta and b chains.

It localises to the cell inner membrane. Functionally, f(1)F(0) ATP synthase produces ATP from ADP in the presence of a proton or sodium gradient. F-type ATPases consist of two structural domains, F(1) containing the extramembraneous catalytic core and F(0) containing the membrane proton channel, linked together by a central stalk and a peripheral stalk. During catalysis, ATP synthesis in the catalytic domain of F(1) is coupled via a rotary mechanism of the central stalk subunits to proton translocation. Its function is as follows. This protein is part of the stalk that links CF(0) to CF(1). It either transmits conformational changes from CF(0) to CF(1) or is implicated in proton conduction. The chain is ATP synthase subunit delta from Rickettsia bellii (strain OSU 85-389).